Consider the following 1364-residue polypeptide: DNA-directed RNA polymerase subunit beta (1364 aa).

It belongs to the RNA polymerase beta chain family. The RNAP catalytic core consists of 2 alpha, 1 beta, 1 beta' and 1 omega subunit. When a sigma factor is associated with the core the holoenzyme is formed, which can initiate transcription.

It catalyses the reaction RNA(n) + a ribonucleoside 5'-triphosphate = RNA(n+1) + diphosphate. DNA-dependent RNA polymerase catalyzes the transcription of DNA into RNA using the four ribonucleoside triphosphates as substrates. This is DNA-directed RNA polymerase subunit beta from Desulfatibacillum aliphaticivorans.